Reading from the N-terminus, the 385-residue chain is Isomaltose glucohydrolase (385 aa).

Trp-125 is a binding site for substrate. The active-site Proton acceptor is Asp-175. Glu-178 (proton donor) is an active-site residue. Glu-335 serves as the catalytic Proton acceptor.

The protein belongs to the glycosyl hydrolase 15 family.

The protein localises to the cytoplasm. The catalysed reaction is isomaltose + H2O = beta-D-glucose + D-glucose. Functionally, involved in the intracellular degradation of the cyclic tetrasaccharide cyclobis-(1-6)-alpha-nigerosyl (CNN) formed extracellularly from starch. Catalyzes the hydrolysis of alpha-1,6-glucosidic linkage from the non-reducing end of isomaltose to yield beta-D-glucose and D-glucose. Can also act on panose and isomaltotriose at a lower rate. It displays low or no activity toward CNN and the general GH15 enzyme substrates such as maltose, soluble starch or dextran. The chain is Isomaltose glucohydrolase from Kribbella flavida (strain DSM 17836 / JCM 10339 / NBRC 14399).